The primary structure comprises 293 residues: 4-diphosphocytidyl-2-C-methyl-D-erythritol kinase (293 aa).

Lys-16 is a catalytic residue. 99–109 (PMGAGLGGGSS) serves as a coordination point for ATP. The active site involves Asp-141.

The protein belongs to the GHMP kinase family. IspE subfamily.

It catalyses the reaction 4-CDP-2-C-methyl-D-erythritol + ATP = 4-CDP-2-C-methyl-D-erythritol 2-phosphate + ADP + H(+). The protein operates within isoprenoid biosynthesis; isopentenyl diphosphate biosynthesis via DXP pathway; isopentenyl diphosphate from 1-deoxy-D-xylulose 5-phosphate: step 3/6. Its function is as follows. Catalyzes the phosphorylation of the position 2 hydroxy group of 4-diphosphocytidyl-2C-methyl-D-erythritol. This chain is 4-diphosphocytidyl-2-C-methyl-D-erythritol kinase, found in Burkholderia multivorans (strain ATCC 17616 / 249).